A 279-amino-acid polypeptide reads, in one-letter code: MGITLKNVSYTYQAGTPFEGPALFGVDLEIKSGSYTALIGHTGSGKSTILQLLNGLLVPNQGSVEVGSTVITADSVNKDIKQVRKKVGLVFQFPESQVFDETVLKDVAFGPQNFGVSKEEAEALAREKLHLVGISEDLFNRSPFELSGGQMRRVAIASILAMEPDILVLDEPTAGLDPSGRKELMRIFEELHRAGMTIVLVTHLMDDVANFADTVYVLDKGRVVKSGQPAQVFQDLDFMESIQLGVPKITKFAHELAEKGMNFSHYPITIEEFKEILHG.

Residues 3–245 enclose the ABC transporter domain; it reads ITLKNVSYTY…LDFMESIQLG (243 aa). An ATP-binding site is contributed by 40 to 47; the sequence is GHTGSGKS.

This sequence belongs to the ABC transporter superfamily. Energy-coupling factor EcfA family. In terms of assembly, forms a stable energy-coupling factor (ECF) transporter complex composed of 2 membrane-embedded substrate-binding proteins (S component), 2 ATP-binding proteins (A component) and 2 transmembrane proteins (T component).

It is found in the cell membrane. ATP-binding (A) component of a common energy-coupling factor (ECF) ABC-transporter complex. Unlike classic ABC transporters this ECF transporter provides the energy necessary to transport a number of different substrates. The polypeptide is Energy-coupling factor transporter ATP-binding protein EcfA2 (Streptococcus sanguinis (strain SK36)).